A 381-amino-acid chain; its full sequence is Peptidoglycan transport system permease protein YejE (381 aa).

The next 5 helical transmembrane spans lie at 38–58 (YWSF…EFIA), 183–203 (VLFG…AGAI), 230–250 (ILLI…GIML), 292–312 (LLPN…SGSI), and 347–367 (WLGL…IFVG). An ABC transmembrane type-1 domain is found at 179 to 371 (FRISVLFGLT…LLIFVGEAVR (193 aa)).

This sequence belongs to the binding-protein-dependent transport system permease family. The complex is composed of one ATP-binding protein (YejF), two transmembrane proteins (YejB and YejE) and a solute-binding protein (YepA or YejA).

It localises to the cell inner membrane. In terms of biological role, part of the ABC transporter complex YejBEF-YepA involved in the uptake of muropeptides, the breakdown products of cell wall peptidoglycan. The import of muropeptides into the cell enables peptidoglycan recycling, which is vital for cell wall integrity in this bacterium. Is also probably part of the ABC transporter complex YejABEF, which is likely involved in broad-spectrum peptide import. Responsible for the translocation of the substrate across the membrane. The chain is Peptidoglycan transport system permease protein YejE from Agrobacterium fabrum (strain C58 / ATCC 33970) (Agrobacterium tumefaciens (strain C58)).